The primary structure comprises 437 residues: GTPase Era, mitochondrial (437 aa).

A mitochondrion-targeting transit peptide spans 1–43; the sequence is MAASSWRGAVLLRTVSGLWQAGPDAAREWMTRLPSLLGFQQRC. Residues 112-330 enclose the Era-type G domain; sequence RVLRVVLLGA…QYLLAQARPG (219 aa). The interval 120 to 127 is G1; sequence GAPNAGKS. 120 to 127 provides a ligand contact to GTP; that stretch reads GAPNAGKS. Positions 146-150 are G2; it reads HTTRS. A G3 region spans residues 167–170; the sequence is DTPG. 167–171 is a GTP binding site; that stretch reads DTPGL. Serine 173 bears the Phosphoserine mark. 236-239 is a binding site for GTP; sequence NKVD. The G4 stretch occupies residues 236–239; that stretch reads NKVD. The disordered stretch occupies residues 264–296; that stretch reads LKTKQALRSRPDTHCPSPAAQGPNPQPVRDPQQ. A G5 region spans residues 308-310; the sequence is LSA. The KH type-2 domain maps to 360-437; sequence LPEEVPYNVQ…QLRLSVKLLK (78 aa).

It belongs to the TRAFAC class TrmE-Era-EngA-EngB-Septin-like GTPase superfamily. Era GTPase family.

The protein resides in the mitochondrion matrix. It is found in the mitochondrion inner membrane. Its function is as follows. Probable GTPase that plays a role in the mitochondrial ribosomal small subunit assembly. Specifically binds the 12S mitochondrial rRNA (12S mt-rRNA) to a 33 nucleotide section delineating the 3' terminal stem-loop region. May act as a chaperone that protects the 12S mt-rRNA on the 28S mitoribosomal subunit during ribosomal small subunit assembly. In Bos taurus (Bovine), this protein is GTPase Era, mitochondrial (ERAL1).